Consider the following 440-residue polypeptide: Diaminopimelate decarboxylase (440 aa).

Lys61 is modified (N6-(pyridoxal phosphate)lysine). Pyridoxal 5'-phosphate contacts are provided by residues Gly234 and 275–278 (EPGR). The substrate site is built by Arg278, Arg314, and Tyr318. The Proton donor role is filled by Cys348. The substrate site is built by Glu349 and Tyr384. Residue Tyr384 coordinates pyridoxal 5'-phosphate. Low complexity predominate over residues 421–431 (LAPELEPGPAL). The tract at residues 421–440 (LAPELEPGPALSPRPSRDPR) is disordered.

Belongs to the Orn/Lys/Arg decarboxylase class-II family. LysA subfamily. Homodimer. It depends on pyridoxal 5'-phosphate as a cofactor.

It carries out the reaction meso-2,6-diaminopimelate + H(+) = L-lysine + CO2. The protein operates within amino-acid biosynthesis; L-lysine biosynthesis via DAP pathway; L-lysine from DL-2,6-diaminopimelate: step 1/1. Functionally, specifically catalyzes the decarboxylation of meso-diaminopimelate (meso-DAP) to L-lysine. This Streptomyces coelicolor (strain ATCC BAA-471 / A3(2) / M145) protein is Diaminopimelate decarboxylase.